A 333-amino-acid polypeptide reads, in one-letter code: Holliday junction branch migration complex subunit RuvB (333 aa).

A large ATPase domain (RuvB-L) region spans residues 1 to 182 (MDERLLSGES…FGVLSRLEYY (182 aa)). ATP-binding positions include leucine 21, arginine 22, glycine 63, lysine 66, threonine 67, threonine 68, 129 to 131 (EDF), arginine 172, tyrosine 182, and arginine 219. Residue threonine 67 participates in Mg(2+) binding. The segment at 183–253 (TVDQLSAIVE…ITQMALELLQ (71 aa)) is small ATPAse domain (RuvB-S). The head domain (RuvB-H) stretch occupies residues 256 to 333 (KLGLDHIDHK…EHFGMEIPKV (78 aa)). The DNA site is built by arginine 311 and arginine 316.

Belongs to the RuvB family. Homohexamer. Forms an RuvA(8)-RuvB(12)-Holliday junction (HJ) complex. HJ DNA is sandwiched between 2 RuvA tetramers; dsDNA enters through RuvA and exits via RuvB. An RuvB hexamer assembles on each DNA strand where it exits the tetramer. Each RuvB hexamer is contacted by two RuvA subunits (via domain III) on 2 adjacent RuvB subunits; this complex drives branch migration. In the full resolvosome a probable DNA-RuvA(4)-RuvB(12)-RuvC(2) complex forms which resolves the HJ.

The protein localises to the cytoplasm. It carries out the reaction ATP + H2O = ADP + phosphate + H(+). In terms of biological role, the RuvA-RuvB-RuvC complex processes Holliday junction (HJ) DNA during genetic recombination and DNA repair, while the RuvA-RuvB complex plays an important role in the rescue of blocked DNA replication forks via replication fork reversal (RFR). RuvA specifically binds to HJ cruciform DNA, conferring on it an open structure. The RuvB hexamer acts as an ATP-dependent pump, pulling dsDNA into and through the RuvAB complex. RuvB forms 2 homohexamers on either side of HJ DNA bound by 1 or 2 RuvA tetramers; 4 subunits per hexamer contact DNA at a time. Coordinated motions by a converter formed by DNA-disengaged RuvB subunits stimulates ATP hydrolysis and nucleotide exchange. Immobilization of the converter enables RuvB to convert the ATP-contained energy into a lever motion, pulling 2 nucleotides of DNA out of the RuvA tetramer per ATP hydrolyzed, thus driving DNA branch migration. The RuvB motors rotate together with the DNA substrate, which together with the progressing nucleotide cycle form the mechanistic basis for DNA recombination by continuous HJ branch migration. Branch migration allows RuvC to scan DNA until it finds its consensus sequence, where it cleaves and resolves cruciform DNA. This chain is Holliday junction branch migration complex subunit RuvB, found in Bacillus cereus (strain B4264).